A 291-amino-acid polypeptide reads, in one-letter code: 4-hydroxy-tetrahydrodipicolinate synthase (291 aa).

Residue Thr-44 coordinates pyruvate. Tyr-132 acts as the Proton donor/acceptor in catalysis. Catalysis depends on Lys-160, which acts as the Schiff-base intermediate with substrate. Residue Ile-202 participates in pyruvate binding.

It belongs to the DapA family. In terms of assembly, homotetramer; dimer of dimers.

The protein resides in the cytoplasm. The catalysed reaction is L-aspartate 4-semialdehyde + pyruvate = (2S,4S)-4-hydroxy-2,3,4,5-tetrahydrodipicolinate + H2O + H(+). It participates in amino-acid biosynthesis; L-lysine biosynthesis via DAP pathway; (S)-tetrahydrodipicolinate from L-aspartate: step 3/4. Catalyzes the condensation of (S)-aspartate-beta-semialdehyde [(S)-ASA] and pyruvate to 4-hydroxy-tetrahydrodipicolinate (HTPA). This is 4-hydroxy-tetrahydrodipicolinate synthase from Rhizorhabdus wittichii (strain DSM 6014 / CCUG 31198 / JCM 15750 / NBRC 105917 / EY 4224 / RW1) (Sphingomonas wittichii).